A 674-amino-acid polypeptide reads, in one-letter code: Probable copper-transporting P-type ATPase B (674 aa).

Residues 1-22 (MNHSNQMHHDNHESHNHHSGHA) are disordered. Residues 7 to 16 (MHHDNHESHN) are compositionally biased toward basic and acidic residues. Helical transmembrane passes span 32–52 (FFVSLIFAIPIILLSPLMGVN), 57–77 (FTFPGSEWVVLILSTILFFYG), 95–115 (GMMTLVALGISVAYIYSLYAF), 127–147 (TMDFFWELATLILIMLLGHWI), 284–304 (GYLFYFAVSVGVISFIVWMLI), and 315–335 (LVTVLVIACPHALGLAIPLVT). The active-site 4-aspartylphosphate intermediate is the Asp-367. Residues Asp-565 and Asp-569 each coordinate Mg(2+). 2 helical membrane-spanning segments follow: residues 623 to 645 (LWWGAGYNIVAVPLAAGILAFIG) and 649 to 671 (SPAIGAILMSLSTVIVAINAFTL).

The protein belongs to the cation transport ATPase (P-type) (TC 3.A.3) family. Type IB subfamily.

It is found in the cell membrane. It carries out the reaction Cu(+)(in) + ATP + H2O = Cu(+)(out) + ADP + phosphate + H(+). Its function is as follows. Involved in copper transport. This Staphylococcus epidermidis (strain ATCC 35984 / DSM 28319 / BCRC 17069 / CCUG 31568 / BM 3577 / RP62A) protein is Probable copper-transporting P-type ATPase B (copB).